A 296-amino-acid polypeptide reads, in one-letter code: 1,2-beta-oligomannan phosphorylase (296 aa).

Belongs to the glycosyl hydrolase 130 family. As to quaternary structure, homodimer.

It catalyses the reaction [(1-&gt;2)-beta-D-mannosyl](n) + phosphate = [(1-&gt;2)-beta-D-mannosyl](n-1) + alpha-D-mannose 1-phosphate. The protein operates within nucleotide-sugar biosynthesis; GDP-alpha-D-mannose biosynthesis. Functionally, probably involved in a salvage pathway for GDP-D-mannose biosynthesis. Catalyzes the reversible phosphorolysis of 1,2-beta-oligomannan. In phosphorolytic reactions, prefers 1,2-beta-oligomannan with a degree of polymerization (DP) of 3, 4 and 5. Produces alpha-D-mannose 1-phosphate, which is the precursor of GDP-D-mannose. The sequence is that of 1,2-beta-oligomannan phosphorylase from Thermoanaerobacter sp. (strain X514).